The chain runs to 62 residues: Large ribosomal subunit protein bL32 (62 aa).

Residues 1–16 are compositionally biased toward basic residues; that stretch reads MAVPKRKTSPSRRGMR. The disordered stretch occupies residues 1-44; that stretch reads MAVPKRKTSPSRRGMRRSADALKAPTYVEDKDSGELRRPHHIDL. A compositionally biased stretch (basic and acidic residues) spans 28–44; that stretch reads VEDKDSGELRRPHHIDL.

Belongs to the bacterial ribosomal protein bL32 family.

This chain is Large ribosomal subunit protein bL32, found in Methylorubrum extorquens (strain CM4 / NCIMB 13688) (Methylobacterium extorquens).